Consider the following 344-residue polypeptide: uncharacterized protein (344 aa).

Residues 1–19 (MRIIFYLTLLLFIFNKVKS) form the signal peptide. Positions 323–344 (SATRNQISIMVLILSVLLVLIL) are cleaved as a propeptide — removed in mature form.

The protein resides in the cell membrane. This is an uncharacterized protein from Dictyostelium discoideum (Social amoeba).